The sequence spans 1019 residues: Phosphatidylinositol 3,4,5-trisphosphate 5-phosphatase 1 (1019 aa).

The SH2 domain maps to 5–101 (WYHGNITRSK…GLVTHLQYPI (97 aa)). The segment covering 103 to 116 (KEEEGPEEPDEEQE) has biased composition (acidic residues). 2 disordered regions span residues 103–133 (KEEEGPEEPDEEQEPAPPNVPPRNFAFTPPS) and 909–1019 (ETQN…PPTA). The short motif at 120–125 (PNVPPR) is the SH3-binding 1 element. 2 stretches are compositionally biased toward polar residues: residues 909-931 (ETQNSMDHTASVAAISSQAKQSP) and 958-980 (PITSPPRTTLSTQKFSHSNTNRT). Residues 966–971 (TLSTQK) carry the SH3-binding 2 motif. The NPXY motif motif lies at 1004-1007 (NPLY). Phosphotyrosine is present on Tyr1007. Residues 1010 to 1019 (VNNTLYPPTA) show a composition bias toward polar residues.

This sequence belongs to the inositol 1,4,5-trisphosphate 5-phosphatase family. Tyrosine phosphorylated by the members of the SRC family after exposure to a diverse array of extracellular stimuli.

The protein resides in the cytoplasm. Its subcellular location is the cell membrane. The protein localises to the membrane raft. It is found in the cytoskeleton. The catalysed reaction is a 1,2-diacyl-sn-glycero-3-phospho-(1D-myo-inositol-3,4,5-trisphosphate) + H2O = a 1,2-diacyl-sn-glycero-3-phospho-(1D-myo-inositol-3,4-bisphosphate) + phosphate. It carries out the reaction 1D-myo-inositol 1,3,4,5-tetrakisphosphate + H2O = 1D-myo-inositol 1,3,4-trisphosphate + phosphate. It catalyses the reaction a 1,2-diacyl-sn-glycero-3-phospho-(1D-myo-inositol-4,5-bisphosphate) + H2O = a 1,2-diacyl-sn-glycero-3-phospho-(1D-myo-inositol 4-phosphate) + phosphate. Functionally, phosphatidylinositol (PtdIns) phosphatase that specifically hydrolyzes the 5-phosphate of phosphatidylinositol-3,4,5-trisphosphate (PtdIns(3,4,5)P3) to produce PtdIns(3,4)P2, thereby negatively regulating the PI3K (phosphoinositide 3-kinase) pathways. Able also to hydrolyzes the 5-phosphate of phosphatidylinositol-4,5-bisphosphate (PtdIns(4,5)P3) and inositol 1,3,4,5-tetrakisphosphate. Acts as a negative regulator of B-cell antigen receptor signaling. Mediates signaling from the FC-gamma-RIIB receptor (FCGR2B), playing a central role in terminating signal transduction from activating immune/hematopoietic cell receptor systems. Acts as a negative regulator of myeloid cell proliferation/survival and chemotaxis, mast cell degranulation, immune cells homeostasis, integrin alpha-IIb/beta-3 signaling in platelets and JNK signaling in B-cells. This is Phosphatidylinositol 3,4,5-trisphosphate 5-phosphatase 1 (inpp5d) from Xenopus laevis (African clawed frog).